A 685-amino-acid chain; its full sequence is ABC transporter G family member 26 (685 aa).

The 265-residue stretch at leucine 65–isoleucine 329 folds into the ABC transporter domain. Residue glycine 124–threonine 131 participates in ATP binding. The ABC transmembrane type-2 domain maps to aspartate 414–tyrosine 623. Helical transmembrane passes span phenylalanine 432–tryptophan 452, leucine 468–phenylalanine 488, methionine 518–phenylalanine 538, isoleucine 542–alanine 562, alanine 576–glutamine 596, and threonine 648–tyrosine 668.

Belongs to the ABC transporter superfamily. ABCG family. Eye pigment precursor importer (TC 3.A.1.204) subfamily. In terms of assembly, homo- or heterodimer. Mostly expressed in flowers, especially in tapetum within anthers.

It localises to the cell membrane. It is found in the endoplasmic reticulum membrane. Its function is as follows. Mediates the transport of sporopollenin precursors (e.g. polyketides) across the tapetum plasma membrane into the anther locule for polymerization on developing microspore walls, thus being required for male fertility and pollen exine formation and patterning prior to tapetum programmed cell death. This is ABC transporter G family member 26 from Arabidopsis thaliana (Mouse-ear cress).